Here is a 500-residue protein sequence, read N- to C-terminus: Lysine--tRNA ligase (500 aa).

Positions 411 and 418 each coordinate Mg(2+).

Belongs to the class-II aminoacyl-tRNA synthetase family. As to quaternary structure, homodimer. The cofactor is Mg(2+).

It localises to the cytoplasm. It carries out the reaction tRNA(Lys) + L-lysine + ATP = L-lysyl-tRNA(Lys) + AMP + diphosphate. This is Lysine--tRNA ligase from Azoarcus sp. (strain BH72).